The sequence spans 214 residues: GTP-binding protein ypt3 (214 aa).

17–24 (GDSGVGKS) provides a ligand contact to GTP. Residues 39–47 (SKSTIGVEF) carry the Effector region motif. A Phosphothreonine modification is found at threonine 42. GTP-binding positions include 65-69 (DTAGQ) and 123-126 (NKTD). 2 S-geranylgeranyl cysteine lipidation sites follow: cysteine 213 and cysteine 214.

This sequence belongs to the small GTPase superfamily. Rab family.

Its subcellular location is the cell membrane. The protein resides in the endosome membrane. It localises to the golgi apparatus membrane. The protein localises to the cytoplasm. It is found in the nucleus. Functionally, has a role in retrograde traffricking of proteins from the endosome to the Golgi. Involved in the secretory pathway where it has a role in acid phosphatase secretion. In Schizosaccharomyces pombe (strain 972 / ATCC 24843) (Fission yeast), this protein is GTP-binding protein ypt3 (ypt3).